Reading from the N-terminus, the 103-residue chain is Large ribosomal subunit protein uL24 (103 aa).

The protein belongs to the universal ribosomal protein uL24 family. Part of the 50S ribosomal subunit.

In terms of biological role, one of two assembly initiator proteins, it binds directly to the 5'-end of the 23S rRNA, where it nucleates assembly of the 50S subunit. One of the proteins that surrounds the polypeptide exit tunnel on the outside of the subunit. This is Large ribosomal subunit protein uL24 from Rhizobium meliloti (strain 1021) (Ensifer meliloti).